Here is a 187-residue protein sequence, read N- to C-terminus: GTP cyclohydrolase 1 (187 aa).

Cys-76, His-79, and Cys-148 together coordinate Zn(2+).

Belongs to the GTP cyclohydrolase I family. In terms of assembly, toroid-shaped homodecamer, composed of two pentamers of five dimers.

It catalyses the reaction GTP + H2O = 7,8-dihydroneopterin 3'-triphosphate + formate + H(+). It functions in the pathway cofactor biosynthesis; 7,8-dihydroneopterin triphosphate biosynthesis; 7,8-dihydroneopterin triphosphate from GTP: step 1/1. This is GTP cyclohydrolase 1 from Streptococcus agalactiae serotype III (strain NEM316).